Reading from the N-terminus, the 313-residue chain is Methionyl-tRNA formyltransferase (313 aa).

112 to 115 (SLLP) is a binding site for (6S)-5,6,7,8-tetrahydrofolate.

This sequence belongs to the Fmt family.

The enzyme catalyses L-methionyl-tRNA(fMet) + (6R)-10-formyltetrahydrofolate = N-formyl-L-methionyl-tRNA(fMet) + (6S)-5,6,7,8-tetrahydrofolate + H(+). Its function is as follows. Attaches a formyl group to the free amino group of methionyl-tRNA(fMet). The formyl group appears to play a dual role in the initiator identity of N-formylmethionyl-tRNA by promoting its recognition by IF2 and preventing the misappropriation of this tRNA by the elongation apparatus. The protein is Methionyl-tRNA formyltransferase of Roseiflexus castenholzii (strain DSM 13941 / HLO8).